The primary structure comprises 395 residues: Acetate kinase (395 aa).

Mg(2+) is bound at residue asparagine 7. ATP is bound at residue lysine 14. Position 92 (arginine 92) interacts with substrate. The active-site Proton donor/acceptor is aspartate 149. ATP contacts are provided by residues 207–211 (HLGNG), 282–284 (DMR), and 329–333 (GIGEN). A Mg(2+)-binding site is contributed by glutamate 382.

Belongs to the acetokinase family. In terms of assembly, homodimer. The cofactor is Mg(2+). Mn(2+) serves as cofactor.

It is found in the cytoplasm. It carries out the reaction acetate + ATP = acetyl phosphate + ADP. The protein operates within metabolic intermediate biosynthesis; acetyl-CoA biosynthesis; acetyl-CoA from acetate: step 1/2. Catalyzes the formation of acetyl phosphate from acetate and ATP. Can also catalyze the reverse reaction. The sequence is that of Acetate kinase from Brachyspira hyodysenteriae (strain ATCC 49526 / WA1).